The following is a 459-amino-acid chain: Tubulin gamma chain (459 aa).

142-148 provides a ligand contact to GTP; it reads AGGTGSG. Positions 440-459 are disordered; that stretch reads ADYLTKETAPTDEAEDKRAG.

It belongs to the tubulin family.

The protein resides in the cytoplasm. It is found in the cytoskeleton. It localises to the microtubule organizing center. The protein localises to the spindle pole body. Functionally, tubulin is the major constituent of microtubules. The gamma chain is found at microtubule organizing centers (MTOC) such as the spindle poles or the centrosome, suggesting that it is involved in the minus-end nucleation of microtubule assembly. The sequence is that of Tubulin gamma chain (TUB4) from Cochliobolus heterostrophus (strain C5 / ATCC 48332 / race O) (Southern corn leaf blight fungus).